The primary structure comprises 116 residues: MTKLWTSLSALHSLAGPVVMLLYPLYASVIAIESPSKVDDEQWLAYWILYSFLTLSELILQSLLEWIPIWYTAKLVFVAWLVLPQFRGAAFIYNKVVREQFKKYGILKPKVEHQAE.

3 consecutive transmembrane segments (helical) span residues 12–32 (HSLA…VIAI), 42–62 (QWLA…ILQS), and 63–83 (LLEW…WLVL).

This sequence belongs to the DP1 family. As to expression, predominantly expressed in stem.

It is found in the membrane. The chain is HVA22-like protein e (HVA22E) from Arabidopsis thaliana (Mouse-ear cress).